Here is a 22-residue protein sequence, read N- to C-terminus: Short-chain-enoyl-CoA hydratase (22 aa).

Belongs to the enoyl-CoA hydratase/isomerase family.

It catalyses the reaction a short-chain (3S)-3-hydroxyacyl-CoA = a short-chain (2E)-enoyl-CoA + H2O. It participates in lipid metabolism; butanoate metabolism. The protein is Short-chain-enoyl-CoA hydratase (crt) of Clostridium pasteurianum.